The primary structure comprises 459 residues: UDP-N-acetylmuramate--L-alanine ligase (459 aa).

118-124 is a binding site for ATP; the sequence is GTHGKTT.

This sequence belongs to the MurCDEF family.

It localises to the cytoplasm. The catalysed reaction is UDP-N-acetyl-alpha-D-muramate + L-alanine + ATP = UDP-N-acetyl-alpha-D-muramoyl-L-alanine + ADP + phosphate + H(+). It participates in cell wall biogenesis; peptidoglycan biosynthesis. Cell wall formation. The sequence is that of UDP-N-acetylmuramate--L-alanine ligase from Lachnospira eligens (strain ATCC 27750 / DSM 3376 / VPI C15-48 / C15-B4) (Eubacterium eligens).